The primary structure comprises 466 residues: Glutamate--tRNA ligase (466 aa).

The 'HIGH' region signature appears at 10 to 20; that stretch reads PSPTGFLHIGG. The short motif at 252 to 256 is the 'KMSKS' region element; that stretch reads KLSKR. Residue K255 participates in ATP binding.

The protein belongs to the class-I aminoacyl-tRNA synthetase family. Glutamate--tRNA ligase type 1 subfamily. As to quaternary structure, monomer.

The protein localises to the cytoplasm. The enzyme catalyses tRNA(Glu) + L-glutamate + ATP = L-glutamyl-tRNA(Glu) + AMP + diphosphate. In terms of biological role, catalyzes the attachment of glutamate to tRNA(Glu) in a two-step reaction: glutamate is first activated by ATP to form Glu-AMP and then transferred to the acceptor end of tRNA(Glu). This is Glutamate--tRNA ligase from Mycoplasmopsis synoviae (strain 53) (Mycoplasma synoviae).